The sequence spans 144 residues: Small ribosomal subunit protein bS6 (144 aa).

The interval 97–144 is disordered; sequence DTEQSLIMKSKDEKGDKPERSERRRRDDEEVDAAPAATDTDGDNAEAA. A compositionally biased stretch (basic and acidic residues) spans 105–124; that stretch reads KSKDEKGDKPERSERRRRDD.

The protein belongs to the bacterial ribosomal protein bS6 family.

Functionally, binds together with bS18 to 16S ribosomal RNA. In Xanthomonas campestris pv. campestris (strain B100), this protein is Small ribosomal subunit protein bS6.